Consider the following 231-residue polypeptide: 5'-methylthioadenosine/S-adenosylhomocysteine nucleosidase (231 aa).

The active-site Proton acceptor is the Glu-13. Substrate contacts are provided by residues Gly-79, Met-154, and 175–176 (ME). Catalysis depends on Asp-199, which acts as the Proton donor.

This sequence belongs to the PNP/UDP phosphorylase family. MtnN subfamily.

It catalyses the reaction S-adenosyl-L-homocysteine + H2O = S-(5-deoxy-D-ribos-5-yl)-L-homocysteine + adenine. It carries out the reaction S-methyl-5'-thioadenosine + H2O = 5-(methylsulfanyl)-D-ribose + adenine. The catalysed reaction is 5'-deoxyadenosine + H2O = 5-deoxy-D-ribose + adenine. It functions in the pathway amino-acid biosynthesis; L-methionine biosynthesis via salvage pathway; S-methyl-5-thio-alpha-D-ribose 1-phosphate from S-methyl-5'-thioadenosine (hydrolase route): step 1/2. Catalyzes the irreversible cleavage of the glycosidic bond in both 5'-methylthioadenosine (MTA) and S-adenosylhomocysteine (SAH/AdoHcy) to adenine and the corresponding thioribose, 5'-methylthioribose and S-ribosylhomocysteine, respectively. Also cleaves 5'-deoxyadenosine, a toxic by-product of radical S-adenosylmethionine (SAM) enzymes, into 5-deoxyribose and adenine. This is 5'-methylthioadenosine/S-adenosylhomocysteine nucleosidase from Marinomonas sp. (strain MWYL1).